Consider the following 638-residue polypeptide: Cytoplasmic dynein 1 intermediate chain 2 (638 aa).

Composition is skewed to basic and acidic residues over residues 1 to 13 (MSDK…ELER) and 20 to 43 (QIRE…KKEA). Disordered regions lie at residues 1–135 (MSDK…GRGP) and 154–209 (VTYT…HELT). N-acetylserine is present on Ser-2. Ser-51 is subject to Diphosphoserine. A phosphoserine mark is found at Ser-51 and Ser-90. Over residues 88-97 (PSSKSVSTPS) the composition is skewed to low complexity. At Thr-95 the chain carries Phosphothreonine. 3 positions are modified to phosphoserine: Ser-97, Ser-101, and Ser-104. The tract at residues 133-165 (RGPIKLGMAKITQVDFPPREIVTYTKETQTPVT) is interaction with DYNLT1. Over residues 190 to 209 (EKILKKDEENDSKAPPHELT) the composition is skewed to basic and acidic residues. 6 WD repeats span residues 277-326 (SKHR…TTPE), 330-370 (HCQS…RTPV), 379-420 (AHTH…HPQD), 429-469 (SKAV…AGIS), 474-519 (GHQG…PLYS), and 568-607 (EGNP…AVPR).

It belongs to the dynein intermediate chain family. In terms of assembly, homodimer. The cytoplasmic dynein 1 complex consists of two catalytic heavy chains (HCs) and a number of non-catalytic subunits presented by intermediate chains (ICs), light intermediate chains (LICs) and light chains (LCs); the composition seems to vary in respect to the IC, LIC and LC composition. The heavy chain homodimer serves as a scaffold for the probable homodimeric assembly of the respective non-catalytic subunits. The ICs and LICs bind directly to the HC dimer and the LCs assemble on the IC dimer. Interacts with DYNLT3. Interacts with DYNLT1. Interacts (dephosphorylated at Ser-90) with DCTN1. Interacts with BICD2. Interacts with SPEF2. Interacts with CFAP61. Post-translationally, the phosphorylation status of Ser-90 appears to be involved in dynactin-dependent target binding. Pyrophosphorylation by 5-diphosphoinositol pentakisphosphate (5-IP7) promotes interaction with DCTN1. Serine pyrophosphorylation is achieved by Mg(2+)-dependent, but enzyme independent transfer of a beta-phosphate from a inositol pyrophosphate to a pre-phosphorylated serine residue. As to expression, skeletal muscle, testis, kidney, brain, heart and spleen.

The protein localises to the cytoplasm. The protein resides in the cytoskeleton. Functionally, acts as one of several non-catalytic accessory components of the cytoplasmic dynein 1 complex that are thought to be involved in linking dynein to cargos and to adapter proteins that regulate dynein function. Cytoplasmic dynein 1 acts as a motor for the intracellular retrograde motility of vesicles and organelles along microtubules. The intermediate chains mediate the binding of dynein to dynactin via its 150 kDa component (p150-glued) DCTN1. Involved in membrane-transport, such as Golgi apparatus, late endosomes and lysosomes. The sequence is that of Cytoplasmic dynein 1 intermediate chain 2 (Dync1i2) from Rattus norvegicus (Rat).